Reading from the N-terminus, the 64-residue chain is Fatty acid synthase (64 aa).

One can recognise a Carrier domain in the interval 1–64 (AEGEGQRDLL…VLSMREVRQL (64 aa)). Residue Ser38 is modified to O-(pantetheine 4'-phosphoryl)serine; alternate. The residue at position 38 (Ser38) is a Phosphoserine; alternate.

Homodimer which is arranged in a head to tail fashion. Interacts with CEACAM1; this interaction is insulin and phosphorylation-dependent; reduces fatty-acid synthase activity.

It localises to the cytoplasm. The protein localises to the melanosome. It carries out the reaction acetyl-CoA + n malonyl-CoA + 2n NADPH + 2n H(+) = a long-chain fatty acid + (n+1) CoA + n CO2 + 2n NADP(+).. Fatty acid synthetase catalyzes the formation of long-chain fatty acids from acetyl-CoA, malonyl-CoA and NADPH. This multifunctional protein has 7 catalytic activities as an acyl carrier protein. The polypeptide is Fatty acid synthase (FASN) (Oryctolagus cuniculus (Rabbit)).